We begin with the raw amino-acid sequence, 460 residues long: 3-isopropylmalate dehydratase large subunit (460 aa).

Residues cysteine 341, cysteine 401, and cysteine 404 each contribute to the [4Fe-4S] cluster site.

This sequence belongs to the aconitase/IPM isomerase family. LeuC type 1 subfamily. Heterodimer of LeuC and LeuD. [4Fe-4S] cluster is required as a cofactor.

The catalysed reaction is (2R,3S)-3-isopropylmalate = (2S)-2-isopropylmalate. It participates in amino-acid biosynthesis; L-leucine biosynthesis; L-leucine from 3-methyl-2-oxobutanoate: step 2/4. In terms of biological role, catalyzes the isomerization between 2-isopropylmalate and 3-isopropylmalate, via the formation of 2-isopropylmaleate. The polypeptide is 3-isopropylmalate dehydratase large subunit (Phocaeicola vulgatus (strain ATCC 8482 / DSM 1447 / JCM 5826 / CCUG 4940 / NBRC 14291 / NCTC 11154) (Bacteroides vulgatus)).